Here is a 283-residue protein sequence, read N- to C-terminus: Putative UTP--glucose-1-phosphate uridylyltransferase (283 aa).

Belongs to the UDPGP type 2 family.

It carries out the reaction alpha-D-glucose 1-phosphate + UTP + H(+) = UDP-alpha-D-glucose + diphosphate. The sequence is that of Putative UTP--glucose-1-phosphate uridylyltransferase from Methanocaldococcus jannaschii (strain ATCC 43067 / DSM 2661 / JAL-1 / JCM 10045 / NBRC 100440) (Methanococcus jannaschii).